The sequence spans 448 residues: MGRLFGTDGVRGVANRELTAELALALGAAAARRLSRSGAPGRRVAVLGRDPRASGEMLEAAVIAGLTSEGVDALRVGVLPTPAVAYLTGAYDADFGVMISASHNPMPDNGIKIFGPGGHKLDDDTEDQIEDLVLGVSRGPGLRPAGAGIGRVIDAEDATERYLRHVAKAATARLDDLAVVVDCAHGAASSAAPRAYRAAGARVIAINAEPNGRNINDGCGSTHLDPLRAAVLAHRADLGLAHDGDADRCLAVDANGDLVDGDAIMVVLALAMKEAGELACNTLVATVMSNLGLHLAMRSAGVTVRTTAVGDRYVLEELRAGDYSLGGEQSGHIVMPALGSTGDGIVTGLRLMTRMVQTGSSLSDLASAMRTLPQVLINVEVVDKATAAAAPSVRTAVEQAAAELGDTGRILLRPSGTEPMIRVMVEAADEGVAQRLAATVADAVSTAR.

The active-site Phosphoserine intermediate is the Ser-102. Residues Ser-102, Asp-243, Asp-245, and Asp-247 each coordinate Mg(2+). Ser-102 carries the phosphoserine modification.

The protein belongs to the phosphohexose mutase family. The cofactor is Mg(2+). Activated by phosphorylation.

It catalyses the reaction alpha-D-glucosamine 1-phosphate = D-glucosamine 6-phosphate. Its function is as follows. Catalyzes the conversion of glucosamine-6-phosphate to glucosamine-1-phosphate. This chain is Phosphoglucosamine mutase, found in Mycobacterium bovis (strain ATCC BAA-935 / AF2122/97).